The following is a 499-amino-acid chain: Pyruvate kinase 2 (499 aa).

Arginine 50 serves as a coordination point for substrate. Asparagine 52, serine 54, aspartate 84, and threonine 85 together coordinate K(+). Position 52–55 (52–55 (NFSH)) interacts with ATP. Arginine 91 provides a ligand contact to ATP. Glutamate 241 is a binding site for Mg(2+). Substrate contacts are provided by glycine 264, aspartate 265, and threonine 297. Aspartate 265 is a binding site for Mg(2+).

Belongs to the pyruvate kinase family. As to quaternary structure, homotetramer. Requires Mg(2+) as cofactor. K(+) serves as cofactor.

It carries out the reaction pyruvate + ATP = phosphoenolpyruvate + ADP + H(+). It functions in the pathway carbohydrate degradation; glycolysis; pyruvate from D-glyceraldehyde 3-phosphate: step 5/5. Activated by fructose 2,6-bisphosphate, activated by the effector in a cooperative manner. This Trypanosoma brucei brucei protein is Pyruvate kinase 2 (PYK2).